The sequence spans 426 residues: Spermidine/putrescine import ATP-binding protein PotA (426 aa).

Residues 6-238 (IEFKNVSKTY…PINHFVADFI (233 aa)) form the ABC transporter domain. 40 to 47 (GASGSGKS) contacts ATP.

This sequence belongs to the ABC transporter superfamily. Spermidine/putrescine importer (TC 3.A.1.11.1) family. In terms of assembly, the complex is composed of two ATP-binding proteins (PotA), two transmembrane proteins (PotB and PotC) and a solute-binding protein (PotD).

The protein localises to the cell membrane. It catalyses the reaction ATP + H2O + polyamine-[polyamine-binding protein]Side 1 = ADP + phosphate + polyamineSide 2 + [polyamine-binding protein]Side 1.. Its function is as follows. Part of the ABC transporter complex PotABCD involved in spermidine/putrescine import. Responsible for energy coupling to the transport system. The chain is Spermidine/putrescine import ATP-binding protein PotA from Lactococcus lactis subsp. cremoris (strain SK11).